Reading from the N-terminus, the 209-residue chain is uncharacterized protein (209 aa).

The region spanning 1-167 is the Nudix hydrolase domain; sequence MRNSAGLFMI…LNTYASSNYG (167 aa).

This is an uncharacterized protein from Orgyia pseudotsugata (Douglas-fir tussock moth).